The sequence spans 492 residues: NADH-quinone oxidoreductase subunit N (492 aa).

Helical transmembrane passes span 13–33 (MLPV…GFWL), 43–63 (ILFV…APWA), 82–102 (AALL…LVSL), 110–132 (VSFA…IAFS), 136–155 (IVML…LATL), 169–189 (FLLG…LYGA), 210–230 (IGIL…KIAL), 245–265 (PTLV…AGML), 272–292 (LAAG…TLVI), 306–326 (LLAY…LGDT), 331–351 (AALG…LAVV), 377–397 (AVAL…AGFF), 410–430 (GYLL…VYYL), and 457–477 (VAVA…NLWY).

It belongs to the complex I subunit 2 family. NDH-1 is composed of 15 different subunits. Subunits NuoA, H, J, K, L, M, N constitute the membrane sector of the complex.

The protein resides in the cell membrane. The catalysed reaction is a quinone + NADH + 5 H(+)(in) = a quinol + NAD(+) + 4 H(+)(out). Its function is as follows. NDH-1 shuttles electrons from NADH, via FMN and iron-sulfur (Fe-S) centers, to quinones in the respiratory chain. The immediate electron acceptor for the enzyme in this species is believed to be a menaquinone. Couples the redox reaction to proton translocation (for every two electrons transferred, four hydrogen ions are translocated across the cytoplasmic membrane), and thus conserves the redox energy in a proton gradient. The sequence is that of NADH-quinone oxidoreductase subunit N from Deinococcus radiodurans (strain ATCC 13939 / DSM 20539 / JCM 16871 / CCUG 27074 / LMG 4051 / NBRC 15346 / NCIMB 9279 / VKM B-1422 / R1).